Consider the following 141-residue polypeptide: Hemoglobin subunit alpha (141 aa).

Residues 1–141 form the Globin domain; sequence VLSPTDKTNV…VSTVLTSKYR (141 aa). The residue at position 3 (serine 3) is a Phosphoserine. The residue at position 7 (lysine 7) is an N6-succinyllysine. The residue at position 8 (threonine 8) is a Phosphothreonine. Lysine 11 carries the N6-succinyllysine modification. Residue tyrosine 24 is modified to Phosphotyrosine. Residue serine 35 is modified to Phosphoserine. Residue lysine 40 is modified to N6-succinyllysine. Serine 49 is modified (phosphoserine). Histidine 58 contributes to the O2 binding site. A heme b-binding site is contributed by histidine 87. Residue serine 102 is modified to Phosphoserine. Threonine 108 is modified (phosphothreonine). Serine 124 carries the post-translational modification Phosphoserine. Phosphothreonine occurs at positions 134 and 137. The residue at position 138 (serine 138) is a Phosphoserine.

The protein belongs to the globin family. Heterotetramer of two alpha chains and two beta chains. Red blood cells.

In terms of biological role, involved in oxygen transport from the lung to the various peripheral tissues. Functionally, hemopressin acts as an antagonist peptide of the cannabinoid receptor CNR1. Hemopressin-binding efficiently blocks cannabinoid receptor CNR1 and subsequent signaling. The polypeptide is Hemoglobin subunit alpha (HBA) (Rhinoceros unicornis (Greater Indian rhinoceros)).